The following is a 173-amino-acid chain: Adenine phosphoribosyltransferase (173 aa).

It belongs to the purine/pyrimidine phosphoribosyltransferase family. As to quaternary structure, homodimer.

Its subcellular location is the cytoplasm. It carries out the reaction AMP + diphosphate = 5-phospho-alpha-D-ribose 1-diphosphate + adenine. Its pathway is purine metabolism; AMP biosynthesis via salvage pathway; AMP from adenine: step 1/1. Catalyzes a salvage reaction resulting in the formation of AMP, that is energically less costly than de novo synthesis. The sequence is that of Adenine phosphoribosyltransferase from Petrotoga mobilis (strain DSM 10674 / SJ95).